A 115-amino-acid chain; its full sequence is Meiotically up-regulated gene 106 protein (115 aa).

A signal peptide spans Met1 to Ala34. Helical transmembrane passes span Cys41 to Phe60 and Gly81 to Tyr103.

Its subcellular location is the membrane. Functionally, has a role in meiosis. This is Meiotically up-regulated gene 106 protein (mug106) from Schizosaccharomyces pombe (strain 972 / ATCC 24843) (Fission yeast).